Consider the following 252-residue polypeptide: Pyridoxine 5'-phosphate synthase (252 aa).

Asparagine 12 provides a ligand contact to 3-amino-2-oxopropyl phosphate. 14 to 15 (DH) is a binding site for 1-deoxy-D-xylulose 5-phosphate. Arginine 23 lines the 3-amino-2-oxopropyl phosphate pocket. The active-site Proton acceptor is the histidine 48. 1-deoxy-D-xylulose 5-phosphate-binding residues include arginine 50 and histidine 55. Residue glutamate 75 is the Proton acceptor of the active site. Threonine 105 contributes to the 1-deoxy-D-xylulose 5-phosphate binding site. Histidine 199 acts as the Proton donor in catalysis. 3-amino-2-oxopropyl phosphate contacts are provided by residues glycine 200 and 221 to 222 (GH).

It belongs to the PNP synthase family. In terms of assembly, homooctamer; tetramer of dimers.

The protein localises to the cytoplasm. It catalyses the reaction 3-amino-2-oxopropyl phosphate + 1-deoxy-D-xylulose 5-phosphate = pyridoxine 5'-phosphate + phosphate + 2 H2O + H(+). The protein operates within cofactor biosynthesis; pyridoxine 5'-phosphate biosynthesis; pyridoxine 5'-phosphate from D-erythrose 4-phosphate: step 5/5. Its function is as follows. Catalyzes the complicated ring closure reaction between the two acyclic compounds 1-deoxy-D-xylulose-5-phosphate (DXP) and 3-amino-2-oxopropyl phosphate (1-amino-acetone-3-phosphate or AAP) to form pyridoxine 5'-phosphate (PNP) and inorganic phosphate. This chain is Pyridoxine 5'-phosphate synthase, found in Cereibacter sphaeroides (strain ATCC 17029 / ATH 2.4.9) (Rhodobacter sphaeroides).